Consider the following 464-residue polypeptide: ATP synthase subunit beta (464 aa).

Residue 153–160 participates in ATP binding; sequence GGAGVGKT.

It belongs to the ATPase alpha/beta chains family. F-type ATPases have 2 components, CF(1) - the catalytic core - and CF(0) - the membrane proton channel. CF(1) has five subunits: alpha(3), beta(3), gamma(1), delta(1), epsilon(1). CF(0) has three main subunits: a(1), b(2) and c(9-12). The alpha and beta chains form an alternating ring which encloses part of the gamma chain. CF(1) is attached to CF(0) by a central stalk formed by the gamma and epsilon chains, while a peripheral stalk is formed by the delta and b chains.

Its subcellular location is the cell inner membrane. The catalysed reaction is ATP + H2O + 4 H(+)(in) = ADP + phosphate + 5 H(+)(out). In terms of biological role, produces ATP from ADP in the presence of a proton gradient across the membrane. The catalytic sites are hosted primarily by the beta subunits. This Burkholderia cenocepacia (strain ATCC BAA-245 / DSM 16553 / LMG 16656 / NCTC 13227 / J2315 / CF5610) (Burkholderia cepacia (strain J2315)) protein is ATP synthase subunit beta.